Reading from the N-terminus, the 188-residue chain is dTTP/UTP pyrophosphatase (188 aa).

The active-site Proton acceptor is D67.

Belongs to the Maf family. YhdE subfamily. A divalent metal cation serves as cofactor.

The protein localises to the cytoplasm. The enzyme catalyses dTTP + H2O = dTMP + diphosphate + H(+). The catalysed reaction is UTP + H2O = UMP + diphosphate + H(+). Functionally, nucleoside triphosphate pyrophosphatase that hydrolyzes dTTP and UTP. May have a dual role in cell division arrest and in preventing the incorporation of modified nucleotides into cellular nucleic acids. This chain is dTTP/UTP pyrophosphatase, found in Thermococcus kodakarensis (strain ATCC BAA-918 / JCM 12380 / KOD1) (Pyrococcus kodakaraensis (strain KOD1)).